Reading from the N-terminus, the 68-residue chain is Amphipathic peptide CT1 (68 aa).

An N-terminal signal peptide occupies residues 1 to 23 (MKTQIVILIVAVLFLQLVSQSDA). Leucine 36 carries the leucine amide modification. A propeptide spanning residues 40–68 (GLKNLDQYNDLFDGEISDADIKFLKDLMR) is cleaved from the precursor.

It belongs to the non-disulfide-bridged peptide (NDBP) superfamily. Short antimicrobial peptide (group 4) family. As to expression, expressed by the venom gland.

The protein localises to the secreted. Its subcellular location is the target cell membrane. Amphipathic peptide that shows no antibacterial activity even at 50 uM but shows a low hemolytic activity against human erythrocytes. This is Amphipathic peptide CT1 from Mesomexovis subcristatus (Scorpion).